Consider the following 318-residue polypeptide: Probable pyridoxal 5'-phosphate synthase subunit PDX1.1 (318 aa).

A D-ribose 5-phosphate-binding site is contributed by Asp49. The Schiff-base intermediate with D-ribose 5-phosphate role is filled by Lys106. Residue Gly178 coordinates D-ribose 5-phosphate. Arg190 lines the D-glyceraldehyde 3-phosphate pocket. D-ribose 5-phosphate-binding positions include Gly239 and Gly260–Ser261.

The protein belongs to the PdxS/SNZ family.

It carries out the reaction aldehydo-D-ribose 5-phosphate + D-glyceraldehyde 3-phosphate + L-glutamine = pyridoxal 5'-phosphate + L-glutamate + phosphate + 3 H2O + H(+). The protein operates within cofactor biosynthesis; pyridoxal 5'-phosphate biosynthesis. Functionally, catalyzes the formation of pyridoxal 5'-phosphate from ribose 5-phosphate (RBP), glyceraldehyde 3-phosphate (G3P) and ammonia. The ammonia is provided by PDX2. Can also use ribulose 5-phosphate and dihydroxyacetone phosphate as substrates, resulting from enzyme-catalyzed isomerization of RBP and G3P, respectively. Also plays an indirect role in resistance to singlet oxygen-generating photosensitizers. This chain is Probable pyridoxal 5'-phosphate synthase subunit PDX1.1 (PDX11), found in Oryza sativa subsp. japonica (Rice).